The chain runs to 1172 residues: Short transient receptor potential channel 2 (1172 aa).

A compositionally biased stretch (basic and acidic residues) spans 1–10 (MLMSRTDSKS). 4 disordered regions span residues 1 to 22 (MLMS…MFKD), 69 to 98 (VVDP…WLTN), 140 to 227 (SAAR…GGVQ), and 249 to 271 (ATCG…SESV). Over 1–659 (MLMSRTDSKS…PKSQLGRLLK (659 aa)) the chain is Cytoplasmic. A compositionally biased stretch (polar residues) spans 75-87 (PGSSGLNQNSTDV). Basic and acidic residues predominate over residues 166-177 (ESAEPRAEEPNR). Positions 195–204 (SLSNSSSQPN) are enriched in polar residues. Residues 206–218 (RTGRTRQRQHRPQ) show a composition bias toward basic residues. Over residues 261–270 (SPASLSSSES) the composition is skewed to low complexity. 3 ANK repeats span residues 301–330 (KFPP…DASG), 377–406 (QIHE…REKG), and 430–459 (PGVT…TIAR). A helical transmembrane segment spans residues 660–680 (IPVLKFLLHSASYLWFLIFLL). The Extracellular portion of the chain corresponds to 681-702 (GESLVMETQLSTFKGRSQSVWE). The helical transmembrane segment at 703–723 (TSLHMIWVTGFLWFECKEVWI) threads the bilayer. The Cytoplasmic portion of the chain corresponds to 724 to 738 (EGLRSYLLDWWNFLD). A helical membrane pass occupies residues 739–759 (VVILSLYLASFALRLLLAGLA). Topologically, residues 760-789 (YMHCRDASDSTTCRYFTTAERSEWRTEDPQ) are extracellular. The chain crosses the membrane as a helical span at residues 790–810 (FLAEVLFAVTSMLSFTRLAYI). Residues 811-833 (LPAHESLGTLQISIGKMIDDMIR) lie on the Cytoplasmic side of the membrane. Residues 834–854 (FMFILMIILTAFLCGLNNIYV) traverse the membrane as a helical segment. The Extracellular segment spans residues 855–899 (PYQESEKLGNFNETFQFLFWTMFGMEEHTVVDMPQFLVPEFVGRA). The chain crosses the membrane as a helical span at residues 900–920 (MYGIFTIVMVIVLLNMLIAMI). At 921–1172 (TNSFQKIEDD…EGDLETKGES (252 aa)) the chain is on the cytoplasmic side. The disordered stretch occupies residues 1118 to 1172 (VSLGDGLDGTGEAGAPAPGEPGSSSSAHVLVHREQEAEGSGDLLLEGDLETKGES). The segment covering 1130-1144 (AGAPAPGEPGSSSSA) has biased composition (low complexity).

Belongs to the transient receptor (TC 1.A.4) family. STrpC subfamily. TRPC2 sub-subfamily. As to expression, isoform 3 is ubiquitously expressed at low levels. Isoform 4 is expressed exclusively in vomeronasal organ.

The protein resides in the membrane. Thought to form a receptor-activated non-selective calcium permeant cation channel. Probably is operated by a phosphatidylinositol second messenger system activated by receptor tyrosine kinases or G-protein coupled receptors. May also be activated by intracellular calcium store depletion. Plays a role in mediating responsivity to pheromones that elicit aggressive and mating behaviors. Required for response to the Esp1 pheromone which enhances female sexual receptive behavior and to the Esp22 pheromone which inhibits adult male mating behavior. This chain is Short transient receptor potential channel 2 (Trpc2), found in Mus musculus (Mouse).